The chain runs to 487 residues: UDP-glucose flavonoid 3-O-glucosyltransferase 7 (487 aa).

Histidine 23 serves as the catalytic Proton acceptor. Histidine 23 lines the an anthocyanidin pocket. The active-site Charge relay is aspartate 121. Positions 345, 347, 362, 365, 366, 367, and 370 each coordinate UDP-alpha-D-glucose. Glycine 385 contacts an anthocyanidin. 2 residues coordinate UDP-alpha-D-glucose: glutamate 386 and glutamine 387.

This sequence belongs to the UDP-glycosyltransferase family. As to expression, strongly expressed in achenes and receptacles.

It catalyses the reaction a flavonol + UDP-alpha-D-glucose = a flavonol 3-O-beta-D-glucoside + UDP + H(+). Broad spectrum multifunctional glucosyltransferase. Catalyzes the formation of flavonol 3-O- and 4'-O-glucosides during fruit ripening. Accepted substrates include several flavonoids, hydroxycoumarins and beta-naphthols. Uses UDP-Glc as a sugar donor, but not UDP-Gal or UDP-GlcUA. May also be involved in detoxification of xenobiotics. The polypeptide is UDP-glucose flavonoid 3-O-glucosyltransferase 7 (Fragaria ananassa (Strawberry)).